A 167-amino-acid chain; its full sequence is NAD(P)H-quinone oxidoreductase subunit I, chloroplastic (167 aa).

2 consecutive 4Fe-4S ferredoxin-type domains span residues 55–84 and 95–124; these read GRIH…VDWK and LNYS…MTEE. Positions 64, 67, 70, 74, 104, 107, 110, and 114 each coordinate [4Fe-4S] cluster.

This sequence belongs to the complex I 23 kDa subunit family. As to quaternary structure, NDH is composed of at least 16 different subunits, 5 of which are encoded in the nucleus. It depends on [4Fe-4S] cluster as a cofactor.

The protein localises to the plastid. Its subcellular location is the chloroplast thylakoid membrane. The enzyme catalyses a plastoquinone + NADH + (n+1) H(+)(in) = a plastoquinol + NAD(+) + n H(+)(out). It carries out the reaction a plastoquinone + NADPH + (n+1) H(+)(in) = a plastoquinol + NADP(+) + n H(+)(out). NDH shuttles electrons from NAD(P)H:plastoquinone, via FMN and iron-sulfur (Fe-S) centers, to quinones in the photosynthetic chain and possibly in a chloroplast respiratory chain. The immediate electron acceptor for the enzyme in this species is believed to be plastoquinone. Couples the redox reaction to proton translocation, and thus conserves the redox energy in a proton gradient. This is NAD(P)H-quinone oxidoreductase subunit I, chloroplastic from Vitis vinifera (Grape).